The primary structure comprises 671 residues: Probable boron transporter 6 (671 aa).

Residues 1–37 are Cytoplasmic-facing; that stretch reads MKSEGESGPFQGILRDIEGRRKCYKQDWIRGIKTGIR. The chain crosses the membrane as a helical span at residues 38-58; it reads ILAPTCYIFFASSLPVVAFGE. The Extracellular segment spans residues 59–77; it reads QLSKHTGGALSAVETLAST. A helical membrane pass occupies residues 78-98; it reads SICGIIHAIFGGQPLLIVGVA. Over 99-123 the chain is Cytoplasmic; that stretch reads EPTIIMYTYLYSFCISRPDIGRELY. A helical transmembrane segment spans residues 124–144; the sequence is LAWVAWVCVWTSVLLILLSIF. Topologically, residues 145-157 are extracellular; that stretch reads NAGTIITRFTRIA. The chain crosses the membrane as a helical span at residues 158-178; sequence GELFGMLIAVLFLQEAIKGLI. At 179–195 the chain is on the cytoplasmic side; that stretch reads SEFHAPEIKNQETGKSH. Residues 196 to 216 form a helical membrane-spanning segment; sequence FLLIYANGLLAVIFSLGLLIT. At 217–235 the chain is on the extracellular side; that stretch reads ALKSRRAKSWKYGFGWLRS. Residues 236–256 traverse the membrane as a helical segment; it reads FIGDYGVPLMVLLWTALSYTV. The Cytoplasmic portion of the chain corresponds to 257–291; the sequence is PSEVLPSVPRRLFCPLPWEPASLYHWTVVKDMGKV. A helical membrane pass occupies residues 292 to 312; sequence PIMYILAAFIPGVMIAGLYFF. Over 313–332 the chain is Extracellular; the sequence is DHSVASQMAQQKEFNLKNPS. Residues 333–353 traverse the membrane as a helical segment; that stretch reads AYHYDIFLLGIITLICGLLGL. Topologically, residues 354-469 are cytoplasmic; it reads PPSNGVLPQA…EQRVSNLLQS (116 aa). The helical transmembrane segment at 470–490 threads the bilayer; that stretch reads VLVGLTLLAVTVIKMIPSSVL. The Extracellular portion of the chain corresponds to 491–557; the sequence is WGYFAYMAID…QLVYFLLCYG (67 aa). A helical transmembrane segment spans residues 558 to 578; it reads MTWIPMAGIFFPALFFLLISI. Topologically, residues 579–671 are cytoplasmic; sequence REHLLPKLFD…EEKHVTFEPH (93 aa).

Belongs to the anion exchanger (TC 2.A.31.3) family.

The protein resides in the membrane. Its function is as follows. Probable boron transporter. Boron is essential for maintaining the integrity of plants cell walls. This is Probable boron transporter 6 (BOR6) from Arabidopsis thaliana (Mouse-ear cress).